Here is a 338-residue protein sequence, read N- to C-terminus: MQTATSIILETLATGMDLAPELAEAGFSRLMDGEMTCAQAGSFLMGLRMKGETPQELTEAVRAALARAVRVTGIDGPTIDIVGTGGDGRSSFNCSTATALTLAGMGHRVVKHGNRAVSSSCGAADAVEGLGLPLELDPEDVRALVAQRNFAFLFAPRFHPAFRNVMPIRRELGVRTLFNLLGPLLNPARPSHMLLGVARAELLPLMARTLLLTGVRRAAVVHGAGGYDELTPMGPAHIMLLEGDGQGHGTLTEISVDPADYGIASCTPEELAVPDRDTAVRVLRELLSGGGPAPMRDMLMLNVGMALHLLEPGLALPDAMAAARLALAAGAGGKVLHA.

Residues G83, 86-87 (GD), S91, 93-96 (NCST), 111-119 (KHGNRAVSS), and A123 contribute to the 5-phospho-alpha-D-ribose 1-diphosphate site. G83 is a binding site for anthranilate. Residue S95 participates in Mg(2+) binding. N114 contacts anthranilate. R169 is an anthranilate binding site. The Mg(2+) site is built by D228 and E229.

This sequence belongs to the anthranilate phosphoribosyltransferase family. As to quaternary structure, homodimer. The cofactor is Mg(2+).

The catalysed reaction is N-(5-phospho-beta-D-ribosyl)anthranilate + diphosphate = 5-phospho-alpha-D-ribose 1-diphosphate + anthranilate. It functions in the pathway amino-acid biosynthesis; L-tryptophan biosynthesis; L-tryptophan from chorismate: step 2/5. Functionally, catalyzes the transfer of the phosphoribosyl group of 5-phosphorylribose-1-pyrophosphate (PRPP) to anthranilate to yield N-(5'-phosphoribosyl)-anthranilate (PRA). The chain is Anthranilate phosphoribosyltransferase from Nitratidesulfovibrio vulgaris (strain DSM 19637 / Miyazaki F) (Desulfovibrio vulgaris).